A 205-amino-acid chain; its full sequence is ATP phosphoribosyltransferase (205 aa).

The protein belongs to the ATP phosphoribosyltransferase family. Short subfamily. In terms of assembly, heteromultimer composed of HisG and HisZ subunits.

Its subcellular location is the cytoplasm. It catalyses the reaction 1-(5-phospho-beta-D-ribosyl)-ATP + diphosphate = 5-phospho-alpha-D-ribose 1-diphosphate + ATP. It participates in amino-acid biosynthesis; L-histidine biosynthesis; L-histidine from 5-phospho-alpha-D-ribose 1-diphosphate: step 1/9. Its function is as follows. Catalyzes the condensation of ATP and 5-phosphoribose 1-diphosphate to form N'-(5'-phosphoribosyl)-ATP (PR-ATP). Has a crucial role in the pathway because the rate of histidine biosynthesis seems to be controlled primarily by regulation of HisG enzymatic activity. The polypeptide is ATP phosphoribosyltransferase (Vesicomyosocius okutanii subsp. Calyptogena okutanii (strain HA)).